The following is a 208-amino-acid chain: Truncated thymidylate kinase (208 aa).

Belongs to the thymidylate kinase family.

In terms of biological role, catalyzes the conversion of dTMP to dTDP. The chain is Truncated thymidylate kinase (TMK) from Ornithodoros (relapsing fever ticks).